Reading from the N-terminus, the 309-residue chain is GTP cyclohydrolase MptA (309 aa).

Belongs to the GTP cyclohydrolase IV family. In terms of assembly, homodimer. The cofactor is Fe(2+).

The catalysed reaction is GTP + H2O = 7,8-dihydroneopterin 2',3'-cyclic phosphate + formate + diphosphate + H(+). Its pathway is cofactor biosynthesis; 5,6,7,8-tetrahydromethanopterin biosynthesis. In terms of biological role, converts GTP to 7,8-dihydro-D-neopterin 2',3'-cyclic phosphate, the first intermediate in the biosynthesis of coenzyme methanopterin. This is GTP cyclohydrolase MptA from Haloarcula marismortui (strain ATCC 43049 / DSM 3752 / JCM 8966 / VKM B-1809) (Halobacterium marismortui).